We begin with the raw amino-acid sequence, 554 residues long: Zinc finger protein 426 (554 aa).

A KRAB domain is found at 42–112 (VTFDDVAVDF…QGGVLQGWEM (71 aa)). A C2H2-type 1; atypical zinc finger spans residues 146–174 (CDCEQCGEVFSEHSCLKTHVRTQSTGNTH). C2H2-type zinc fingers lie at residues 224-246 (FECSHCGKSFINESYLQAHMRTH), 280-302 (YKCKECGKGYRYPAYLSIHMRTH), 308-330 (YECKECGKAFNYSNSFQIHGRTH), 336-358 (YVCKECGKAFTQYSGLSMHVRSH), 364-386 (YECKECGKSFLTSSRLIQHIRTH), 392-414 (FVCVECGKAFAVSSNLSGHLRTH), 420-442 (CECKICGKVFGYPSCLNNHMRTH), 448-470 (YTCKECGKAFNYSTHLKIHMRIH), 476-498 (YECKQCGKAFSHSSSFQIHERTH), 504-526 (YECKECGKAFTCSSSFRIHEKTH), and 532-554 (YKCQQCGKAYSHPRSLRRHEQIH).

It localises to the nucleus. Its function is as follows. May be involved in transcriptional regulation. This Homo sapiens (Human) protein is Zinc finger protein 426 (ZNF426).